Consider the following 289-residue polypeptide: Oxaloacetate decarboxylase (289 aa).

Ser50 contacts substrate. Position 88 (Asp88) interacts with Mg(2+). The substrate site is built by Arg159 and His235.

This sequence belongs to the isocitrate lyase/PEP mutase superfamily. Oxaloacetate decarboxylase family. As to quaternary structure, homotetramer; dimer of dimers. The cofactor is Mg(2+).

It carries out the reaction oxaloacetate + H(+) = pyruvate + CO2. In terms of biological role, catalyzes the decarboxylation of oxaloacetate into pyruvate. Seems to play a role in maintaining cellular concentrations of bicarbonate and pyruvate. The sequence is that of Oxaloacetate decarboxylase from Pseudomonas putida (strain GB-1).